The sequence spans 163 residues: Phosphopantetheine adenylyltransferase (163 aa).

Substrate is bound at residue Ser10. Residues 10–11 and His18 each bind ATP; that span reads SF. Residues Lys42, Leu78, and Lys92 each coordinate substrate. ATP is bound by residues 93–95, Glu103, and 127–133; these read GVR and HAHVSSS.

The protein belongs to the bacterial CoaD family. As to quaternary structure, homohexamer. The cofactor is Mg(2+).

The protein localises to the cytoplasm. It catalyses the reaction (R)-4'-phosphopantetheine + ATP + H(+) = 3'-dephospho-CoA + diphosphate. It participates in cofactor biosynthesis; coenzyme A biosynthesis; CoA from (R)-pantothenate: step 4/5. In terms of biological role, reversibly transfers an adenylyl group from ATP to 4'-phosphopantetheine, yielding dephospho-CoA (dPCoA) and pyrophosphate. The polypeptide is Phosphopantetheine adenylyltransferase (Clavibacter michiganensis subsp. michiganensis (strain NCPPB 382)).